Here is a 288-residue protein sequence, read N- to C-terminus: NH(3)-dependent NAD(+) synthetase (288 aa).

46–53 (GISGGQDS) lines the ATP pocket. Residue Asp52 coordinates Mg(2+). Arg153 lines the deamido-NAD(+) pocket. Thr173 serves as a coordination point for ATP. Residue Glu178 coordinates Mg(2+). Residues Lys186 and Asp193 each coordinate deamido-NAD(+). Lys202 and Thr224 together coordinate ATP. 273-274 (HK) contacts deamido-NAD(+).

This sequence belongs to the NAD synthetase family. In terms of assembly, homodimer.

The enzyme catalyses deamido-NAD(+) + NH4(+) + ATP = AMP + diphosphate + NAD(+) + H(+). It participates in cofactor biosynthesis; NAD(+) biosynthesis; NAD(+) from deamido-NAD(+) (ammonia route): step 1/1. Catalyzes the ATP-dependent amidation of deamido-NAD to form NAD. Uses ammonia as a nitrogen source. The chain is NH(3)-dependent NAD(+) synthetase from Deinococcus geothermalis (strain DSM 11300 / CIP 105573 / AG-3a).